The sequence spans 685 residues: Acetate--CoA ligase [ADP-forming] I (685 aa).

The region spanning 477–513 (LPVLEAYGIEVAPYGIARNVDEARDIAESIGYPVVLK) is the ATP-grasp domain. Position 503 to 514 (503 to 514 (AESIGYPVVLKV)) interacts with ATP.

This sequence in the N-terminal section; belongs to the acetate CoA ligase alpha subunit family. The protein in the C-terminal section; belongs to the acetate CoA ligase beta subunit family. As to quaternary structure, homodimer.

The catalysed reaction is acetate + ATP + CoA = acetyl-CoA + ADP + phosphate. Its activity is regulated as follows. Activity requires divalent metal cations. Its function is as follows. Catalyzes the reversible formation of acetate and ATP from acetyl-CoA by using ADP and phosphate. Can use other substrates such as propionyl-CoA and butyryl-CoA, but not phenylacetyl-CoA. Seems to be involved primarily in the conversion of acetyl-CoA to acetate. Participates in the degradation of branched-chain amino acids via branched-chain-acyl-CoA esters. This chain is Acetate--CoA ligase [ADP-forming] I, found in Archaeoglobus fulgidus (strain ATCC 49558 / DSM 4304 / JCM 9628 / NBRC 100126 / VC-16).